The chain runs to 815 residues: Probable inorganic carbon transporter subunit DabA (815 aa).

4 residues coordinate Zn(2+): Cys334, Asp336, His507, and Cys522.

This sequence belongs to the inorganic carbon transporter (TC 9.A.2) DabA family. As to quaternary structure, forms a complex with DabB. Zn(2+) is required as a cofactor.

The protein localises to the cell inner membrane. Its function is as follows. Part of an energy-coupled inorganic carbon pump. The chain is Probable inorganic carbon transporter subunit DabA from Ectopseudomonas mendocina (strain ymp) (Pseudomonas mendocina).